Here is a 521-residue protein sequence, read N- to C-terminus: C-22 sterol desaturase erg5 (521 aa).

Residues alanine 30–isoleucine 50 form a helical membrane-spanning segment.

It belongs to the cytochrome P450 family. It depends on heme as a cofactor.

The protein resides in the endoplasmic reticulum membrane. It catalyses the reaction 5-dehydroepisterol + NADPH + O2 + H(+) = ergosta-5,7,22,24(28)-tetraen-3beta-ol + NADP(+) + 2 H2O. It functions in the pathway steroid metabolism; ergosterol biosynthesis. Functionally, C-22 sterol desaturase; part of the third module of ergosterol biosynthesis pathway that includes the late steps of the pathway. Erg5 converts 5-dehydroepisterol into ergosta-5,7,22,24(28)-tetraen-3beta-ol by forming the C-22(23) double bond in the sterol side chain. The third module or late pathway involves the ergosterol synthesis itself through consecutive reactions that mainly occur in the endoplasmic reticulum (ER) membrane. Firstly, the squalene synthase erg9 catalyzes the condensation of 2 farnesyl pyrophosphate moieties to form squalene, which is the precursor of all steroids. Squalene synthase is crucial for balancing the incorporation of farnesyl diphosphate (FPP) into sterol and nonsterol isoprene synthesis. Secondly, squalene is converted into lanosterol by the consecutive action of the squalene epoxidase erg1 and the lanosterol synthase erg7. Then, the delta(24)-sterol C-methyltransferase erg6 methylates lanosterol at C-24 to produce eburicol. Eburicol is the substrate of the sterol 14-alpha demethylase encoded by cyp51A and cyp51B, to yield 4,4,24-trimethyl ergosta-8,14,24(28)-trienol. The C-14 reductase erg24 then reduces the C14=C15 double bond which leads to 4,4-dimethylfecosterol. A sequence of further demethylations at C-4, involving the C-4 demethylation complex containing the C-4 methylsterol oxidases erg25A or erg25B, the sterol-4-alpha-carboxylate 3-dehydrogenase erg26 and the 3-keto-steroid reductase erg27, leads to the production of fecosterol via 4-methylfecosterol. The C-8 sterol isomerase erg2 then catalyzes the reaction which results in unsaturation at C-7 in the B ring of sterols and thus converts fecosterol to episterol. The sterol-C5-desaturase erg3B then catalyzes the introduction of a C-5 double bond in the B ring to produce 5-dehydroepisterol. The 2 other sterol-C5-desaturases, erg3A and erg3C, seem to be less important in ergosterol biosynthesis. The C-22 sterol desaturase erg5 further converts 5-dehydroepisterol into ergosta-5,7,22,24(28)-tetraen-3beta-ol by forming the C-22(23) double bond in the sterol side chain. Finally, ergosta-5,7,22,24(28)-tetraen-3beta-ol is substrate of the C-24(28) sterol reductases erg4A and erg4B to produce ergosterol. Possible alternative sterol biosynthetic pathways might exist from fecosterol to ergosterol, depending on the activities of the erg3 isoforms. This chain is C-22 sterol desaturase erg5, found in Aspergillus fumigatus (strain ATCC MYA-4609 / CBS 101355 / FGSC A1100 / Af293) (Neosartorya fumigata).